Reading from the N-terminus, the 621-residue chain is Probable potassium transport system protein Kup 2 (621 aa).

A run of 12 helical transmembrane segments spans residues 12 to 32 (ITVAAIGVVFGDIGTSPLYAL), 52 to 72 (VLSLVFWAIIVLVTIKYVAII), 101 to 121 (WIITLLGIFAAALFYGDSMIT), 138 to 158 (PDLKSYVIPITLGILTGLFFI), 166 to 186 (VGKLFGPVMVAWFGILAILGL), 213 to 233 (GLAFLALGSVVLAVTGGEALY), 249 to 269 (FGFVMPALVLNYFGQGALLLI), 286 to 306 (ALIPMVGLATAATVIASQAVI), 338 to 358 (IYVPFTNWSLYLAVIALVIGF), 370 to 390 (IAVTGTMLIDTILVAFVMVLM), 396 to 416 (LLVALVAGTLLLVDIAFFAAN), and 420 to 440 (IPEGGWFPLAMGLVSFTVLTT).

The protein belongs to the HAK/KUP transporter (TC 2.A.72) family.

Its subcellular location is the cell inner membrane. It catalyses the reaction K(+)(in) + H(+)(in) = K(+)(out) + H(+)(out). Its function is as follows. Transport of potassium into the cell. Likely operates as a K(+):H(+) symporter. This chain is Probable potassium transport system protein Kup 2, found in Dechloromonas aromatica (strain RCB).